The following is a 1605-amino-acid chain: Ribosome-binding protein 1 (1605 aa).

Over 1 to 7 (MDIYDTQ) the chain is Lumenal. The chain crosses the membrane as a helical span at residues 8–28 (TLGVVVFGGFMVVSAIGIFLV). The Cytoplasmic portion of the chain corresponds to 29-1605 (STFSMKETSY…GSSSKEGTSV (1577 aa)). Residues 44-88 (NQRKEMAKTHHQKGEKKKKEKTVEKKGKTKKKEEKPNGKIPEHDL) form a disordered region. Basic residues predominate over residues 52–63 (THHQKGEKKKKE). Basic and acidic residues predominate over residues 64–88 (KTVEKKGKTKKKEEKPNGKIPEHDL). A Phosphoserine modification is found at Ser-111. A disordered region spans residues 114–150 (SSVGHTPIATVPAMPQEKLASSPKDRKKKEKKVAKVE). A Glycyl lysine isopeptide (Lys-Gly) (interchain with G-Cter in SUMO2) cross-link involves residue Lys-148. Residues Ser-159 and Ser-165 each carry the phosphoserine modification. Positions 172–849 (ATPKEVPMVA…PGPPDCDGPL (678 aa)) are disordered. Tandem repeats lie at residues 196-205 (SQGKKGQGAQ), 206-215 (NQAKKGEGAQ), 216-225 (NQGKKGEGAQ), 226-235 (NQAKKGEGAQ), 236-245 (NQAKKGEGAQ), 246-255 (NQGKKGEGAQ), 256-265 (NQAKKGEGGQ), 266-275 (NQAKKGEGAQ), 276-285 (NQGKKGEGAQ), 286-295 (NQGKKGEGAQ), 296-305 (NQAKKGEGAQ), 306-315 (NQAKKGEGAQ), 316-325 (NQGKKGEGAQ), 326-335 (NQSKKGEGAQ), 336-345 (NQAKKGEGGQ), 346-355 (NQAKKGEGAQ), 356-365 (NQAKKGEGAQ), 366-375 (NQAKKGEGVQ), 376-385 (NQAKKGVEGA), 386-395 (QNQGKKGEAN), 396-405 (QNQAKKGEGG), 406-415 (QNQTKKGEGP), 416-425 (QNQGKKGEAA), 426-435 (QKQDKKIEGA), 436-445 (QNQGKKPEGT), 446-455 (SNQGKKGEGA), 456-465 (QNQGKKGEGA), 466-475 (QNQSKKGEGA), 476-485 (QNQAKKGEGG), 486-495 (QNQAKKGEGA), 496-505 (QNQAKKGEGA), 506-515 (QNQAKKGEGV), 516-525 (QNQAKKGVEG), 527-536 (QNQGKKGEAN), 537-546 (QNQAKKGEGG), 547-556 (QNQTKKGEGP), 557-566 (QNQGKKGEAA), 567-576 (QKQDKKIEGA), 577-586 (QNQGKKPEGT), 587-596 (SNQGKKGEGA), 597-606 (QNQGKKGEGA), 607-616 (QNQGKKGEGA), 617-626 (QNQGKKGEGA), 628-637 (NQGKKGEGAQ), 638-647 (NQGKKGEGAQ), 648-657 (NQGKKGEGAQ), 658-667 (NQGKKGEGPQ), 668-677 (NQAKKGEGAQ), 678-687 (NQGKKGEGAQ), 688-697 (NQGKKGEGAQ), 698-707 (NQGKKAEGVQ), 708-717 (SQSKKGEGTQ), 718-727 (NQGKKGDGNP), 729-738 (QGKKGEGASN), 739-748 (QNRKTDTVAN), 749-758 (QGTKQEGVSN), 759-768 (QVKKSEGSPN), 769-778 (QGKKAEGAPN), 779-788 (QGKKKDGSPS), 789-798 (QAKKVDAAAN), and 799-808 (QGKKSEMAPA). Positions 196–808 (SQGKKGQGAQ…QGKKSEMAPA (613 aa)) are 61 X 10 AA tandem repeats of [NSQ]-[NKQVGA]-[GSAQKRT]-[ASGDTK]-[KGTQSAV]-[KGAED]-[EQVGIPTDMA]-[EGVAS]-[AGVPETNS]-[AQNGPTVS]. Positions 197-208 (QGKKGQGAQNQA) are enriched in low complexity. 4 stretches are compositionally biased toward polar residues: residues 224 to 258 (AQNQ…QNQA), 274 to 338 (AQNQ…QNQA), 354 to 378 (AQNQ…QNQA), and 385 to 399 (AQNQ…QNQA). The segment covering 420–433 (KKGEAAQKQDKKIE) has biased composition (basic and acidic residues). Polar residues-rich tracts occupy residues 435-479 (AQNQ…QNQA), 495-519 (AQNQ…QNQA), and 526-540 (AQNQ…QNQA). A compositionally biased stretch (basic and acidic residues) spans 561 to 574 (KKGEAAQKQDKKIE). 2 stretches are compositionally biased toward polar residues: residues 576-720 (AQNQ…QNQG) and 736-769 (ASNQ…SPNQ). Ser-786 carries the post-translational modification Phosphoserine. Residues 811 to 821 (QKASMVQSQEA) show a composition bias toward polar residues. At Ser-818 the chain carries Phosphoserine. Lys-823 participates in a covalent cross-link: Glycyl lysine isopeptide (Lys-Gly) (interchain with G-Cter in SUMO1). Lys-1135 carries the N6-acetyllysine modification. Phosphoserine occurs at positions 1162 and 1178. 2 disordered regions span residues 1460 to 1481 (MRSH…AEQD) and 1571 to 1605 (TTQE…GTSV). Residues 1576-1598 (LTKEKDTVKKLQEQLGKAEDGSS) show a composition bias toward basic and acidic residues.

In terms of tissue distribution, widely expressed.

The protein localises to the endoplasmic reticulum membrane. Functionally, acts as a ribosome receptor and mediates interaction between the ribosome and the endoplasmic reticulum membrane. In Mus musculus (Mouse), this protein is Ribosome-binding protein 1 (Rrbp1).